A 92-amino-acid chain; its full sequence is Cell division topological specificity factor (92 aa).

Belongs to the MinE family.

Prevents the cell division inhibition by proteins MinC and MinD at internal division sites while permitting inhibition at polar sites. This ensures cell division at the proper site by restricting the formation of a division septum at the midpoint of the long axis of the cell. This Symbiobacterium thermophilum (strain DSM 24528 / JCM 14929 / IAM 14863 / T) protein is Cell division topological specificity factor.